Reading from the N-terminus, the 45-residue chain is Large ribosomal subunit protein bL34 (45 aa).

Positions 23 to 45 are disordered; it reads ETPGGKKVLSARRAKGRKNLIAK. A compositionally biased stretch (basic residues) spans 31 to 45; that stretch reads LSARRAKGRKNLIAK.

This sequence belongs to the bacterial ribosomal protein bL34 family.

In Elusimicrobium minutum (strain Pei191), this protein is Large ribosomal subunit protein bL34.